Consider the following 91-residue polypeptide: Small integral membrane protein 13 (91 aa).

The helical transmembrane segment at 10-30 (LVFVATLLIVLLLMVCGWYFV) threads the bilayer. Residues 47–91 (DTGSQEGDHEPSGSETEEDTSSSPHRIRSARQRRAPADEGHRPLT) are disordered. Residues Ser58 and Ser60 each carry the phosphoserine modification. The residue at position 62 (Thr62) is a Phosphothreonine. Position 69 is a phosphoserine (Ser69). A compositionally biased stretch (basic residues) spans 71–80 (HRIRSARQRR). The segment covering 81–91 (APADEGHRPLT) has biased composition (basic and acidic residues).

It belongs to the SMIM13 family.

Its subcellular location is the membrane. This Homo sapiens (Human) protein is Small integral membrane protein 13 (SMIM13).